A 93-amino-acid chain; its full sequence is Small ribosomal subunit protein uS19 (93 aa).

Residues 73 to 93 form a disordered region; it reads EFSPTRTYRGHNKKDKKIQKK. Over residues 80–93 the composition is skewed to basic residues; it reads YRGHNKKDKKIQKK.

Belongs to the universal ribosomal protein uS19 family.

Functionally, protein S19 forms a complex with S13 that binds strongly to the 16S ribosomal RNA. The polypeptide is Small ribosomal subunit protein uS19 (rpsS) (Aster yellows phytoplasma).